A 610-amino-acid polypeptide reads, in one-letter code: Ectonucleoside triphosphate diphosphohydrolase 7 (610 aa).

At 1–28 the chain is on the cytoplasmic side; sequence MARISFSCLFPASWHCSLPSVTQFSRQR. A helical membrane pass occupies residues 29–49; the sequence is VALLIISVAVFILVFAAVADL. Over 50-555 the chain is Vesicular; it reads QLWSSRAFRD…VSWFRISFVY (506 aa). The active-site Proton acceptor is glutamate 217. Asparagine 336 and asparagine 400 each carry an N-linked (GlcNAc...) asparagine glycan. Cysteine 454 and cysteine 483 are oxidised to a cystine. Residues 556–576 form a helical membrane-spanning segment; that stretch reads NHYLFFACILVVLLSIVLYIL. Topologically, residues 577–610 are cytoplasmic; the sequence is RLRRIHRRQARASALDLLLMEEGVHTVLEPGIPT.

It belongs to the GDA1/CD39 NTPase family. Ca(2+) is required as a cofactor. It depends on Mg(2+) as a cofactor.

It localises to the cytoplasmic vesicle membrane. It catalyses the reaction a ribonucleoside 5'-triphosphate + H2O = a ribonucleoside 5'-diphosphate + phosphate + H(+). It carries out the reaction UTP + H2O = UDP + phosphate + H(+). The catalysed reaction is GTP + H2O = GDP + phosphate + H(+). The enzyme catalyses CTP + H2O = CDP + phosphate + H(+). Functionally, catalyzes the hydrolysis of nucleoside triphosphates and diphosphates in a calcium- or magnesium-dependent manner. Preferentially hydrolyzes nucleoside 5'-triphosphates, with substrate preference for UTP &gt; GTP &gt; CTP. Hydrolyzes ATP and nucleoside diphosphates only to a minor extent. This chain is Ectonucleoside triphosphate diphosphohydrolase 7 (entpd7), found in Xenopus tropicalis (Western clawed frog).